Consider the following 260-residue polypeptide: 14-3-3 protein 4 (260 aa).

The disordered stretch occupies residues 238-260; that stretch reads DNADDVGDDIKEASKPESGEGQQ. Residues 245–260 show a composition bias toward basic and acidic residues; sequence DDIKEASKPESGEGQQ.

Belongs to the 14-3-3 family. As to quaternary structure, homodimer.

The chain is 14-3-3 protein 4 (TFT4) from Solanum lycopersicum (Tomato).